The following is a 481-amino-acid chain: Pentatricopeptide repeat-containing protein 8, mitochondrial (481 aa).

A mitochondrion-targeting transit peptide spans 1–55; sequence MQGFGSQIFRKLLRSSNAKVSDALLQNTRTLFTAPPLHSGLQTSFTAETQQHVRQ. PPR repeat units follow at residues 137 to 172 and 365 to 399; these read SARF…EFLP and SIST…GLKP.

It localises to the mitochondrion. In terms of biological role, mitochondrial RNA-binding protein involved in mitochondrial translation. The cox1 mRNA is one target but it is not clear if ppr8 has a single or multiple targets. In Schizosaccharomyces pombe (strain 972 / ATCC 24843) (Fission yeast), this protein is Pentatricopeptide repeat-containing protein 8, mitochondrial (ppr8).